Consider the following 144-residue polypeptide: Small ribosomal subunit protein bS6 (144 aa).

The segment at 92 to 144 (KVDGHDEGPSVQMQKRDDRGDREERGDRGDRGDRGPRGDRGPREDRGPRPERR) is disordered. The span at 93 to 144 (VDGHDEGPSVQMQKRDDRGDREERGDRGDRGDRGPRGDRGPREDRGPRPERR) shows a compositional bias: basic and acidic residues.

The protein belongs to the bacterial ribosomal protein bS6 family.

Its function is as follows. Binds together with bS18 to 16S ribosomal RNA. The sequence is that of Small ribosomal subunit protein bS6 (rpsF) from Rhodobacter capsulatus (strain ATCC BAA-309 / NBRC 16581 / SB1003).